Here is a 185-residue protein sequence, read N- to C-terminus: Elongation factor P (185 aa).

Belongs to the elongation factor P family.

The protein resides in the cytoplasm. Its pathway is protein biosynthesis; polypeptide chain elongation. Functionally, involved in peptide bond synthesis. Stimulates efficient translation and peptide-bond synthesis on native or reconstituted 70S ribosomes in vitro. Probably functions indirectly by altering the affinity of the ribosome for aminoacyl-tRNA, thus increasing their reactivity as acceptors for peptidyl transferase. This Trichodesmium erythraeum (strain IMS101) protein is Elongation factor P.